We begin with the raw amino-acid sequence, 394 residues long: Acid ceramidase (394 aa).

The first 18 residues, 1 to 18, serve as a signal peptide directing secretion; that stretch reads MRGQSLLTWVLAAAVTCA. An intrachain disulfide couples C30 to C339. C142 (nucleophile) is an active-site residue. 5 N-linked (GlcNAc...) asparagine glycosylation sites follow: N172, N194, N258, N341, and N347. A disulfide bond links C387 and C391.

The protein belongs to the acid ceramidase family. In terms of assembly, heterodimer; disulfide-linked. The heterodimer is composed of the disulfide-linked alpha and beta chains produced by autocatalytic cleavage of the precursor. Post-translationally, N-glycosylated. Proteolytically cleaved into two chains alpha and beta that remain associated via a disulfide bond. Cleavage gives rise to a conformation change that activates the enzyme. The same catalytic Cys residue mediates the autoproteolytic cleavage and subsequent hydrolysis of lipid substrates. The beta chain may undergo an additional C-terminal processing. In terms of tissue distribution, widely expressed.

Its subcellular location is the lysosome. The protein resides in the secreted. It catalyses the reaction an N-acylsphing-4-enine + H2O = sphing-4-enine + a fatty acid. The catalysed reaction is N-dodecanoylsphing-4-enine + H2O = dodecanoate + sphing-4-enine. The enzyme catalyses N-(9Z-octadecenoyl)-sphing-4-enine + H2O = sphing-4-enine + (9Z)-octadecenoate. It carries out the reaction N-tetradecanoylsphing-4-enine + H2O = tetradecanoate + sphing-4-enine. It catalyses the reaction N-hexadecanoylsphing-4-enine + H2O = sphing-4-enine + hexadecanoate. The catalysed reaction is N-octadecanoylsphing-4-enine + H2O = sphing-4-enine + octadecanoate. The enzyme catalyses N-dodecanoyl-(4R)-hydroxysphinganine + H2O = (4R)-hydroxysphinganine + dodecanoate. It carries out the reaction N-(dodecanoyl)-sphinganine + H2O = dodecanoate + sphinganine. It catalyses the reaction N-(acetyl)-sphing-4-enine + H2O = sphing-4-enine + acetate. The catalysed reaction is N-(hexanoyl)sphing-4-enine + H2O = hexanoate + sphing-4-enine. The enzyme catalyses N-octanoylsphing-4-enine + H2O = octanoate + sphing-4-enine. It carries out the reaction N-dodecanoylethanolamine + H2O = dodecanoate + ethanolamine. The protein operates within lipid metabolism; sphingolipid metabolism. Its function is as follows. Lysosomal ceramidase that hydrolyzes sphingolipid ceramides into sphingosine and free fatty acids at acidic pH. Ceramides, sphingosine, and its phosphorylated form sphingosine-1-phosphate are bioactive lipids that mediate cellular signaling pathways regulating several biological processes including cell proliferation, apoptosis and differentiation. Has a higher catalytic efficiency towards C12-ceramides versus other ceramides. Also catalyzes the reverse reaction allowing the synthesis of ceramides from fatty acids and sphingosine. For the reverse synthetic reaction, the natural sphingosine D-erythro isomer is more efficiently utilized as a substrate compared to D-erythro-dihydrosphingosine and D-erythro-phytosphingosine, while the fatty acids with chain lengths of 12 or 14 carbons are the most efficiently used. Also has an N-acylethanolamine hydrolase activity. By regulating the levels of ceramides, sphingosine and sphingosine-1-phosphate in the epidermis, mediates the calcium-induced differentiation of epidermal keratinocytes. Also indirectly regulates tumor necrosis factor/TNF-induced apoptosis. By regulating the intracellular balance between ceramides and sphingosine, in adrenocortical cells, probably also acts as a regulator of steroidogenesis. In Mus musculus (Mouse), this protein is Acid ceramidase.